Reading from the N-terminus, the 250-residue chain is ATP synthase subunit b 2 (250 aa).

Residues 2 to 22 (LIDWFTVFAQILNFVILLGLL) traverse the membrane as a helical segment.

It belongs to the ATPase B chain family. F-type ATPases have 2 components, F(1) - the catalytic core - and F(0) - the membrane proton channel. F(1) has five subunits: alpha(3), beta(3), gamma(1), delta(1), epsilon(1). F(0) has four main subunits: a(1), b(1), b'(1) and c(10-14). The alpha and beta chains form an alternating ring which encloses part of the gamma chain. F(1) is attached to F(0) by a central stalk formed by the gamma and epsilon chains, while a peripheral stalk is formed by the delta, b and b' chains.

The protein localises to the cellular thylakoid membrane. In terms of biological role, f(1)F(0) ATP synthase produces ATP from ADP in the presence of a proton or sodium gradient. F-type ATPases consist of two structural domains, F(1) containing the extramembraneous catalytic core and F(0) containing the membrane proton channel, linked together by a central stalk and a peripheral stalk. During catalysis, ATP synthesis in the catalytic domain of F(1) is coupled via a rotary mechanism of the central stalk subunits to proton translocation. Its function is as follows. Component of the F(0) channel, it forms part of the peripheral stalk, linking F(1) to F(0). The polypeptide is ATP synthase subunit b 2 (Picosynechococcus sp. (strain ATCC 27264 / PCC 7002 / PR-6) (Agmenellum quadruplicatum)).